The primary structure comprises 365 residues: DNA replication and repair protein RecF (365 aa).

30–37 is a binding site for ATP; the sequence is GANGQGKT.

It belongs to the RecF family.

It localises to the cytoplasm. Its function is as follows. The RecF protein is involved in DNA metabolism; it is required for DNA replication and normal SOS inducibility. RecF binds preferentially to single-stranded, linear DNA. It also seems to bind ATP. The sequence is that of DNA replication and repair protein RecF from Geobacter sulfurreducens (strain ATCC 51573 / DSM 12127 / PCA).